We begin with the raw amino-acid sequence, 459 residues long: Ribulose bisphosphate carboxylase large chain (459 aa).

The residue at position 4 (K4) is an N6,N6,N6-trimethyllysine. N113 and T163 together coordinate substrate. The active-site Proton acceptor is K165. Residue K167 participates in substrate binding. 3 residues coordinate Mg(2+): K191, D193, and E194. The residue at position 191 (K191) is an N6-carboxylysine. The active-site Proton acceptor is the H284. Residues R285, H317, and S369 each coordinate substrate.

Belongs to the RuBisCO large chain family. Type I subfamily. As to quaternary structure, heterohexadecamer of 8 large chains and 8 small chains; disulfide-linked. The disulfide link is formed within the large subunit homodimers. Mg(2+) serves as cofactor. In terms of processing, the disulfide bond which can form in the large chain dimeric partners within the hexadecamer appears to be associated with oxidative stress and protein turnover.

The protein localises to the plastid. Its subcellular location is the chloroplast. The catalysed reaction is 2 (2R)-3-phosphoglycerate + 2 H(+) = D-ribulose 1,5-bisphosphate + CO2 + H2O. The enzyme catalyses D-ribulose 1,5-bisphosphate + O2 = 2-phosphoglycolate + (2R)-3-phosphoglycerate + 2 H(+). In terms of biological role, ruBisCO catalyzes two reactions: the carboxylation of D-ribulose 1,5-bisphosphate, the primary event in carbon dioxide fixation, as well as the oxidative fragmentation of the pentose substrate in the photorespiration process. Both reactions occur simultaneously and in competition at the same active site. In Nypa fruticans (Nypa palm), this protein is Ribulose bisphosphate carboxylase large chain.